We begin with the raw amino-acid sequence, 141 residues long: Large ribosomal subunit protein uL11 (141 aa).

The protein belongs to the universal ribosomal protein uL11 family. As to quaternary structure, part of the ribosomal stalk of the 50S ribosomal subunit. Interacts with L10 and the large rRNA to form the base of the stalk. L10 forms an elongated spine to which L12 dimers bind in a sequential fashion forming a multimeric L10(L12)X complex. One or more lysine residues are methylated.

In terms of biological role, forms part of the ribosomal stalk which helps the ribosome interact with GTP-bound translation factors. The polypeptide is Large ribosomal subunit protein uL11 (Prochlorococcus marinus (strain MIT 9312)).